A 343-amino-acid polypeptide reads, in one-letter code: F17b-G fimbrial adhesin (343 aa).

An N-terminal signal peptide occupies residues Met1 to Ala22. Residues Val23–Val199 are receptor-binding lectin domain. A carbohydrate-binding positions include Ala65–Asn66, Asp110–Thr111, and Ser138–Gly141. Cys75 and Cys132 are joined by a disulfide. A fimbrillin-binding domain region spans residues Thr200 to Gln343. Positions Leu287 to Gly307 are disordered. Residues Asn298 to Gly307 are compositionally biased toward polar residues.

This sequence belongs to the fimbrial protein family.

Its subcellular location is the fimbrium. Essential fimbrial adhesion factor that mediates binding to N-acetylglucosamine-containing receptors in the host intestinal microvilli, leading to colonization of the intestinal tissue, and diarrhea or septicemia. Also confers adhesiveness to laminin and basement membranes. The sequence is that of F17b-G fimbrial adhesin (f17bG) from Escherichia coli.